A 192-amino-acid chain; its full sequence is MASSCPGTPSPAGLPPPSVATPGETLGPAAPPEPAFPDIYGGDAQLWEAHFRGIGRAYRALGKQDDFAIRVLTENFTLPFPFAWPPGSDPACGPLFYDPRDRADFDFLLRGPGASPPALLRPLHATAQAAMRKRRLERLALSCARARGPGPASSCCCPAPPPPSRSPRPALPATAPPGWPRPRRCPESEQNK.

2 disordered regions span residues 1-37 (MASS…PAFP) and 146-192 (ARGP…EQNK). Pro residues-rich tracts occupy residues 8–19 (TPSPAGLPPPSV) and 159–180 (APPP…PGWP).

This is an uncharacterized protein from Homo sapiens (Human).